The primary structure comprises 1577 residues: Disco-interacting protein 2 homolog B-A (1577 aa).

Positions aspartate 7–phenylalanine 124 constitute a DMAP1-binding domain. Disordered stretches follow at residues glutamate 109 to arginine 148, valine 173 to threonine 204, aspartate 217 to serine 239, and serine 253 to arginine 273. Positions phenylalanine 124–alanine 140 are enriched in polar residues. Over residues serine 176–serine 187 the composition is skewed to low complexity. Positions aspartate 217–aspartate 236 are enriched in polar residues.

It belongs to the DIP2 family.

The protein localises to the cell projection. It localises to the dendrite. The protein resides in the axon. Its subcellular location is the perikaryon. In terms of biological role, negatively regulates axonal outgrowth and is essential for normal synaptic transmission. Not required for regulation of axon polarity. Promotes acetylation of alpha-tubulin. The sequence is that of Disco-interacting protein 2 homolog B-A (dip2ba) from Danio rerio (Zebrafish).